A 70-amino-acid polypeptide reads, in one-letter code: ATP synthase subunit c (70 aa).

The next 2 helical transmembrane spans lie at 4 to 24 (IAAG…DGIV) and 47 to 67 (FIGV…ALMV).

Belongs to the ATPase C chain family. F-type ATPases have 2 components, F(1) - the catalytic core - and F(0) - the membrane proton channel. F(1) has five subunits: alpha(3), beta(3), gamma(1), delta(1), epsilon(1). F(0) has three main subunits: a(1), b(2) and c(10-14). The alpha and beta chains form an alternating ring which encloses part of the gamma chain. F(1) is attached to F(0) by a central stalk formed by the gamma and epsilon chains, while a peripheral stalk is formed by the delta and b chains.

It is found in the cell membrane. In terms of biological role, f(1)F(0) ATP synthase produces ATP from ADP in the presence of a proton or sodium gradient. F-type ATPases consist of two structural domains, F(1) containing the extramembraneous catalytic core and F(0) containing the membrane proton channel, linked together by a central stalk and a peripheral stalk. During catalysis, ATP synthesis in the catalytic domain of F(1) is coupled via a rotary mechanism of the central stalk subunits to proton translocation. Functionally, key component of the F(0) channel; it plays a direct role in translocation across the membrane. A homomeric c-ring of between 10-14 subunits forms the central stalk rotor element with the F(1) delta and epsilon subunits. This is ATP synthase subunit c from Levilactobacillus brevis (strain ATCC 367 / BCRC 12310 / CIP 105137 / JCM 1170 / LMG 11437 / NCIMB 947 / NCTC 947) (Lactobacillus brevis).